A 466-amino-acid polypeptide reads, in one-letter code: Glutamate--tRNA ligase 1 (466 aa).

A 'HIGH' region motif is present at residues 9 to 19 (PSPTGLLHIGN). The 'KMSKS' region signature appears at 238 to 242 (KLSKR). ATP is bound at residue lysine 241.

The protein belongs to the class-I aminoacyl-tRNA synthetase family. Glutamate--tRNA ligase type 1 subfamily. As to quaternary structure, monomer.

Its subcellular location is the cytoplasm. It carries out the reaction tRNA(Glu) + L-glutamate + ATP = L-glutamyl-tRNA(Glu) + AMP + diphosphate. Functionally, catalyzes the attachment of glutamate to tRNA(Glu) in a two-step reaction: glutamate is first activated by ATP to form Glu-AMP and then transferred to the acceptor end of tRNA(Glu). The protein is Glutamate--tRNA ligase 1 of Gluconacetobacter diazotrophicus (strain ATCC 49037 / DSM 5601 / CCUG 37298 / CIP 103539 / LMG 7603 / PAl5).